A 406-amino-acid chain; its full sequence is Haptoglobin (406 aa).

Positions 1–18 are cleaved as a signal peptide; the sequence is MSALGAVIALLLWGQLFA. 2 Sushi domains span residues 31–88 and 90–147; these read DGCP…ECEA. Disulfide bonds link C52–C86, C111–C145, C149–C266, C309–C340, and C351–C381. The region spanning 162–404 is the Peptidase S1 domain; that stretch reads ILGGHLDAKG…IQDWVQKTIA (243 aa). The N-linked (GlcNAc...) (complex) asparagine glycan is linked to N184. Residues N207 and N211 are each glycosylated (N-linked (GlcNAc...) asparagine). N241 carries an N-linked (GlcNAc...) (complex) asparagine glycan. Residues 318–323 form an interaction with CD163 region; sequence VPEKKT.

This sequence belongs to the peptidase S1 family. As to quaternary structure, tetramer of two alpha and two beta chains; disulfide-linked. The hemoglobin/haptoglobin complex is composed of a haptoglobin dimer bound to two hemoglobin alpha-beta dimers. Interacts with CD163. Interacts with ERGIC3. As to expression, expressed by the liver and secreted in plasma.

Its subcellular location is the secreted. In terms of biological role, as a result of hemolysis, hemoglobin is found to accumulate in the kidney and is secreted in the urine. Haptoglobin captures, and combines with free plasma hemoglobin to allow hepatic recycling of heme iron and to prevent kidney damage. Haptoglobin also acts as an antioxidant, has antibacterial activity, and plays a role in modulating many aspects of the acute phase response. Hemoglobin/haptoglobin complexes are rapidly cleared by the macrophage CD163 scavenger receptor expressed on the surface of liver Kupfer cells through an endocytic lysosomal degradation pathway. Functionally, the uncleaved form of allele alpha-2 (2-2), known as zonulin, plays a role in intestinal permeability, allowing intercellular tight junction disassembly, and controlling the equilibrium between tolerance and immunity to non-self antigens. The chain is Haptoglobin (HP) from Homo sapiens (Human).